The chain runs to 292 residues: uncharacterized protein (292 aa).

5 helical membrane-spanning segments follow: residues 57–77 (IISLVIFLVGSVLSKHILTLI), 101–121 (VYVFIPIFAGIIAIPVMFNFM), 143–163 (LIYAITFTLRVATCVSFAVLI), 184–204 (VVITITNLAYRYIFLLLNFVL), and 271–291 (IAFLLFSIIITALLVLFDRGI).

It belongs to the CbiQ family.

Its subcellular location is the cell membrane. This is an uncharacterized protein from Methanocaldococcus jannaschii (strain ATCC 43067 / DSM 2661 / JAL-1 / JCM 10045 / NBRC 100440) (Methanococcus jannaschii).